We begin with the raw amino-acid sequence, 447 residues long: Signal recognition particle 54 kDa protein (447 aa).

GTP is bound by residues 103-110, 185-189, and 245-248; these read GVQGSGKT, DTAGR, and TKMD.

Belongs to the GTP-binding SRP family. SRP54 subfamily. In terms of assembly, part of the signal recognition particle protein translocation system, which is composed of SRP and FtsY. Archaeal SRP consists of a 7S RNA molecule of 300 nucleotides and two protein subunits: SRP54 and SRP19.

Its subcellular location is the cytoplasm. The enzyme catalyses GTP + H2O = GDP + phosphate + H(+). Functionally, involved in targeting and insertion of nascent membrane proteins into the cytoplasmic membrane. Binds to the hydrophobic signal sequence of the ribosome-nascent chain (RNC) as it emerges from the ribosomes. The SRP-RNC complex is then targeted to the cytoplasmic membrane where it interacts with the SRP receptor FtsY. This is Signal recognition particle 54 kDa protein from Saccharolobus islandicus (strain M.16.27) (Sulfolobus islandicus).